Here is a 124-residue protein sequence, read N- to C-terminus: Small ribosomal subunit protein bS6 (124 aa).

Residues 100-124 (KERRAARQKTGETQENVSQEESSTN) form a disordered region. Residues 110–124 (GETQENVSQEESSTN) show a composition bias toward polar residues.

The protein belongs to the bacterial ribosomal protein bS6 family.

In terms of biological role, binds together with bS18 to 16S ribosomal RNA. The sequence is that of Small ribosomal subunit protein bS6 from Fervidobacterium nodosum (strain ATCC 35602 / DSM 5306 / Rt17-B1).